The following is a 962-amino-acid chain: Putative primase C962R (962 aa).

Positions 607–775 (ELDARLWIMF…PDPNNSYEKK (169 aa)) constitute an SF3 helicase domain. Residue 636–643 (GGGCNGKT) coordinates ATP.

The protein belongs to the asfivirus helicase C962R family.

The protein is Putative primase C962R of Ornithodoros (relapsing fever ticks).